The chain runs to 293 residues: Immediate early response gene 5-like protein (293 aa).

Belongs to the IER family.

The sequence is that of Immediate early response gene 5-like protein (ier5l) from Xenopus laevis (African clawed frog).